Here is a 601-residue protein sequence, read N- to C-terminus: Probable sphingosine-1-phosphate lyase (601 aa).

Lys360 bears the N6-(pyridoxal phosphate)lysine mark.

The protein belongs to the group II decarboxylase family. Sphingosine-1-phosphate lyase subfamily. Requires pyridoxal 5'-phosphate as cofactor.

It carries out the reaction sphinganine 1-phosphate = hexadecanal + phosphoethanolamine. Its function is as follows. Cleaves phosphorylated sphingoid bases (PSBs), such as sphingosine-1-phosphate, into fatty aldehydes and phosphoethanolamine. Possibly implicated in influencing the macrophage autophagy pathway. The sequence is that of Probable sphingosine-1-phosphate lyase from Legionella pneumophila subsp. pneumophila (strain Philadelphia 1 / ATCC 33152 / DSM 7513).